A 298-amino-acid polypeptide reads, in one-letter code: Glyoxalase domain-containing protein 4 (298 aa).

The 126-residue stretch at 5 to 130 (RALHFVFKVK…GGYKFYLQDR (126 aa)) folds into the VOC 1 domain. Lys109 is modified (N6-succinyllysine). A Phosphoserine modification is found at Ser131. Residues 137-258 (PVLKVTLAVS…DGHEICFVGD (122 aa)) form the VOC 2 domain. An N6-succinyllysine modification is found at Lys273.

Belongs to the glyoxalase I family. In terms of assembly, interacts with NUDT9.

Its subcellular location is the mitochondrion. This Mus musculus (Mouse) protein is Glyoxalase domain-containing protein 4 (Glod4).